Reading from the N-terminus, the 204-residue chain is MAYSIEEEQEINQLKDWWKENGKTIIVAFILGVGGMFGWRYWQTHQAEQIAQASAQYDTLINSVQQDEQAKKANIEQFVQANSKTAYAVFALLDEAKKATEKQDFSAAEANLNQALTQSQDEVLTSIVALRLSAVQFQLGQLDNALSTLNQVKGESFNARKAILTGDIQVAKGDKVAAKNSFEQAQQSGSQLEQQMAKMKLNNL.

Residues 1-23 (MAYSIEEEQEINQLKDWWKENGK) lie on the Cytoplasmic side of the membrane. Residues 24-42 (TIIVAFILGVGGMFGWRYW) form a helical membrane-spanning segment. At 43–204 (QTHQAEQIAQ…QMAKMKLNNL (162 aa)) the chain is on the periplasmic side.

Belongs to the YfgM family. As to quaternary structure, interacts with the SecYEG translocon. Forms a complex with PpiD.

The protein localises to the cell inner membrane. In terms of biological role, may mediate protein transfer from the SecYEG translocon to the periplasmic chaperone network via its periplasmic C-terminal region. The sequence is that of Ancillary SecYEG translocon subunit from Haemophilus influenzae (strain ATCC 51907 / DSM 11121 / KW20 / Rd).